The sequence spans 443 residues: Postreplication repair E3 ubiquitin-protein ligase rad18 (443 aa).

Residues 30–68 form an RING-type zinc finger; sequence CQVCKDFFDNPVITSCSHTFCSLCIRRCLSTEGKCPTCR. The disordered stretch occupies residues 106-157; it reads GTDDSGDLAAEEPASKKRKIEPNAIVGTDGLPEEGIRTRSQSRGASRQPQAT. Polar residues predominate over residues 143 to 157; the sequence is TRSQSRGASRQPQAT. The UBZ4-type zinc-finger motif lies at 175 to 202; sequence LVPCPVCGRRMKEEAVFRHLDSCTGTAE. Cysteine 178, cysteine 181, histidine 193, and cysteine 197 together coordinate Zn(2+). The SAP domain maps to 239-273; it reads LKDTVLRKKLKDLGIPNWGPRALLQRRHTEWLNLW. 2 stretches are compositionally biased toward polar residues: residues 350–363 and 431–443; these read IPNASQANSDTPRS and PISSSASTHKTPH. Residues 350–443 are disordered; it reads IPNASQANSD…SSASTHKTPH (94 aa).

This sequence belongs to the RAD18 family. As to quaternary structure, interacts with E2 UBC2, forming a complex with ubiquitin ligase activity.

It localises to the nucleus. The enzyme catalyses S-ubiquitinyl-[E2 ubiquitin-conjugating enzyme]-L-cysteine + [acceptor protein]-L-lysine = [E2 ubiquitin-conjugating enzyme]-L-cysteine + N(6)-ubiquitinyl-[acceptor protein]-L-lysine.. Its pathway is protein modification; protein ubiquitination. E3 RING-finger protein, member of the UBC2/RAD6 epistasis group. Associates to the E2 ubiquitin conjugating enzyme UBC2/RAD6 to form the UBC2-RAD18 ubiquitin ligase complex involved in postreplicative repair (PRR) of damaged DNA. This is Postreplication repair E3 ubiquitin-protein ligase rad18 (uvsH) from Emericella nidulans (strain FGSC A4 / ATCC 38163 / CBS 112.46 / NRRL 194 / M139) (Aspergillus nidulans).